Here is a 310-residue protein sequence, read N- to C-terminus: Ribosomal RNA small subunit methyltransferase H (310 aa).

S-adenosyl-L-methionine contacts are provided by residues 32 to 34 (GGH), aspartate 52, phenylalanine 79, aspartate 100, and glutamine 107.

The protein belongs to the methyltransferase superfamily. RsmH family.

It localises to the cytoplasm. The enzyme catalyses cytidine(1402) in 16S rRNA + S-adenosyl-L-methionine = N(4)-methylcytidine(1402) in 16S rRNA + S-adenosyl-L-homocysteine + H(+). Functionally, specifically methylates the N4 position of cytidine in position 1402 (C1402) of 16S rRNA. The protein is Ribosomal RNA small subunit methyltransferase H of Geobacillus kaustophilus (strain HTA426).